Reading from the N-terminus, the 131-residue chain is Large ribosomal subunit protein bL12c (131 aa).

The tract at residues 107–131 (QGVSKDDAEASKKQLEDAGAKVKIS) is disordered. Residues 110–131 (SKDDAEASKKQLEDAGAKVKIS) are compositionally biased toward basic and acidic residues.

The protein belongs to the bacterial ribosomal protein bL12 family. Homodimer. Part of the ribosomal stalk of the 50S ribosomal subunit. Forms a multimeric L10(L12)X complex, where L10 forms an elongated spine to which 2 to 4 L12 dimers bind in a sequential fashion. Binds GTP-bound translation factors.

It localises to the plastid. The protein resides in the chloroplast. In terms of biological role, forms part of the ribosomal stalk which helps the ribosome interact with GTP-bound translation factors. Is thus essential for accurate translation. The sequence is that of Large ribosomal subunit protein bL12c from Chlorella vulgaris (Green alga).